The primary structure comprises 327 residues: Biotin synthase (327 aa).

Positions 44-273 (FMGNKFDTCS…NAFLRFSGGR (230 aa)) constitute a Radical SAM core domain. [4Fe-4S] cluster contacts are provided by C62, C66, and C69. The [2Fe-2S] cluster site is built by C138, C198, and R268.

Belongs to the radical SAM superfamily. Biotin synthase family. Homodimer. The cofactor is [4Fe-4S] cluster. It depends on [2Fe-2S] cluster as a cofactor.

It carries out the reaction (4R,5S)-dethiobiotin + (sulfur carrier)-SH + 2 reduced [2Fe-2S]-[ferredoxin] + 2 S-adenosyl-L-methionine = (sulfur carrier)-H + biotin + 2 5'-deoxyadenosine + 2 L-methionine + 2 oxidized [2Fe-2S]-[ferredoxin]. Its pathway is cofactor biosynthesis; biotin biosynthesis; biotin from 7,8-diaminononanoate: step 2/2. Catalyzes the conversion of dethiobiotin (DTB) to biotin by the insertion of a sulfur atom into dethiobiotin via a radical-based mechanism. This chain is Biotin synthase, found in Parabacteroides distasonis (strain ATCC 8503 / DSM 20701 / CIP 104284 / JCM 5825 / NCTC 11152).